Consider the following 322-residue polypeptide: Quinolinate synthase (322 aa).

The iminosuccinate site is built by His38 and Ser55. A [4Fe-4S] cluster-binding site is contributed by Cys100. Residues 126 to 128 (YIN) and Ser143 each bind iminosuccinate. [4Fe-4S] cluster is bound at residue Cys186. Residues 212-214 (HPE) and Thr229 each bind iminosuccinate. Residue Cys279 coordinates [4Fe-4S] cluster.

Belongs to the quinolinate synthase family. Type 2 subfamily. [4Fe-4S] cluster serves as cofactor.

Its subcellular location is the cytoplasm. The catalysed reaction is iminosuccinate + dihydroxyacetone phosphate = quinolinate + phosphate + 2 H2O + H(+). Its pathway is cofactor biosynthesis; NAD(+) biosynthesis; quinolinate from iminoaspartate: step 1/1. Catalyzes the condensation of iminoaspartate with dihydroxyacetone phosphate to form quinolinate. In Cyanothece sp. (strain PCC 7425 / ATCC 29141), this protein is Quinolinate synthase.